Reading from the N-terminus, the 1009-residue chain is Helicase-like transcription factor (1009 aa).

Residue R27 is modified to Omega-N-methylarginine. The DNA-binding element occupies 38–287 (EFQDVIPPDD…FSEKDRPENV (250 aa)). Residue K112 forms a Glycyl lysine isopeptide (Lys-Gly) (interchain with G-Cter in SUMO2) linkage. Y195 carries the phosphotyrosine; by JAK2 modification. A Glycyl lysine isopeptide (Lys-Gly) (interchain with G-Cter in SUMO2) cross-link involves residue K211. 294–301 (DDMGLGKT) provides a ligand contact to ATP. The segment at 336–365 (DDSMKLGGNNTSEKADGLSKDASRCSEQPS) is disordered. The span at 348-359 (EKADGLSKDASR) shows a compositional bias: basic and acidic residues. Phosphoserine is present on residues S397, S398, and S400. The Helicase ATP-binding domain occupies 435 to 606 (IEDVAFACAL…WSLLSFLKLK (172 aa)). The short motif at 557-560 (DEGH) is the DEGH box element. A Phosphothreonine modification is found at T736. The segment at 760-801 (CAICLDSLTVPVITHCAHVFCKPCICQVIQNEQPHAKCPLCR) adopts an RING-type zinc-finger fold. Residues 837 to 996 (ALMHALTDLR…TKKPNADEMK (160 aa)) enclose the Helicase C-terminal domain. The interval 925-1009 (SRVFLMDPAW…INEIRTLIDL (85 aa)) is interaction with SP1 and SP3.

Belongs to the SNF2/RAD54 helicase family. RAD16 subfamily. As to quaternary structure, interacts with SP1 and SP3 independently of DNA; the interaction with these transcriptional factors may be required for basal transcription of target genes. Interacts with EGR1; the interaction requires prior binding to DNA and represses c-Rel via a DNA looping mechanism. Interacts with GATA4. Interacts with PCNA; the interaction promotes polyubiquitination of PCNA through association with the UBE2B-RAD18 and UBE2V2-UBE2N ubiquitin ligase complexes. Interacts with RAD18, SHPRH, UBE2V2 and UBE2N. In terms of tissue distribution, expressed in brain, heart, kidney, liver, lung, pancreas, placenta and skeletal muscle.

The protein localises to the cytoplasm. Its subcellular location is the nucleus. The protein resides in the nucleolus. It is found in the nucleoplasm. The catalysed reaction is S-ubiquitinyl-[E2 ubiquitin-conjugating enzyme]-L-cysteine + [acceptor protein]-L-lysine = [E2 ubiquitin-conjugating enzyme]-L-cysteine + N(6)-ubiquitinyl-[acceptor protein]-L-lysine.. The protein operates within protein modification; protein ubiquitination. Its function is as follows. Has both helicase and E3 ubiquitin ligase activities. Possesses intrinsic ATP-dependent nucleosome-remodeling activity; This activity may be required for transcriptional activation or repression of specific target promoters. These may include the SERPINE1 and HIV-1 promoters and the SV40 enhancer, to which this protein can bind directly. Plays a role in error-free postreplication repair (PRR) of damaged DNA and maintains genomic stability through acting as a ubiquitin ligase for 'Lys-63'-linked polyubiquitination of chromatin-bound PCNA. The protein is Helicase-like transcription factor (HLTF) of Homo sapiens (Human).